Here is a 381-residue protein sequence, read N- to C-terminus: Phosphatidyl-myo-inositol mannosyltransferase (381 aa).

2 residues coordinate GDP-alpha-D-mannose: Tyr9 and Gly16. A 1,2-diacyl-sn-glycero-3-phospho-(1D-myo-inositol) contacts are provided by residues Gln18, 69 to 70 (FN), and Arg75. GDP-alpha-D-mannose contacts are provided by residues Arg204, 209–210 (RK), 251–253 (LDD), Arg256, 274–278 (ESFGI), and Glu282.

This sequence belongs to the glycosyltransferase group 1 family. Glycosyltransferase 4 subfamily. As to quaternary structure, monomer. Mg(2+) is required as a cofactor.

Its subcellular location is the cell membrane. The enzyme catalyses a 1,2-diacyl-sn-glycero-3-phospho-(1D-myo-inositol) + GDP-alpha-D-mannose = a 1,2-diacyl-sn-glycero-3-phospho-[alpha-D-mannopyranosyl-(1&lt;-&gt;6)-D-myo-inositol] + GDP + H(+). It functions in the pathway phospholipid metabolism; phosphatidylinositol metabolism. Its function is as follows. Involved in the biosynthesis of phosphatidyl-myo-inositol mannosides (PIM) which are early precursors in the biosynthesis of lipomannans (LM) and lipoarabinomannans (LAM). Catalyzes the addition of a mannosyl residue from GDP-D-mannose (GDP-Man) to the position 2 of the carrier lipid phosphatidyl-myo-inositol (PI) to generate a phosphatidyl-myo-inositol bearing an alpha-1,2-linked mannose residue (PIM1). In Propionibacterium freudenreichii subsp. shermanii (strain ATCC 9614 / DSM 4902 / CIP 103027 / NCIMB 8099 / CIRM-BIA1), this protein is Phosphatidyl-myo-inositol mannosyltransferase.